We begin with the raw amino-acid sequence, 496 residues long: Probable cytosol aminopeptidase (496 aa).

Mn(2+)-binding residues include Lys266 and Asp271. Lys278 is a catalytic residue. Residues Asp289, Asp348, and Glu350 each coordinate Mn(2+). Arg352 is an active-site residue.

Belongs to the peptidase M17 family. Mn(2+) is required as a cofactor.

It localises to the cytoplasm. It catalyses the reaction Release of an N-terminal amino acid, Xaa-|-Yaa-, in which Xaa is preferably Leu, but may be other amino acids including Pro although not Arg or Lys, and Yaa may be Pro. Amino acid amides and methyl esters are also readily hydrolyzed, but rates on arylamides are exceedingly low.. The catalysed reaction is Release of an N-terminal amino acid, preferentially leucine, but not glutamic or aspartic acids.. Presumably involved in the processing and regular turnover of intracellular proteins. Catalyzes the removal of unsubstituted N-terminal amino acids from various peptides. The chain is Probable cytosol aminopeptidase from Pseudomonas syringae pv. tomato (strain ATCC BAA-871 / DC3000).